The primary structure comprises 623 residues: MAU2 chromatid cohesion factor homolog (623 aa).

3 TPR repeats span residues 96 to 129, 451 to 484, and 491 to 524; these read FDTASLLAQLHLKTEQSPHAKAMLRRAVELSQNN, GGFYYVQGLHAFHKNSFHEAKRFLRETLKMANAE, and SCSLVLLSHVFLSIGNSKESMNMVTPAMQLASKI.

This sequence belongs to the SCC4/mau-2 family. In terms of assembly, interacts with Nipped-B to form the cohesin loading complex.

It localises to the nucleus. It is found in the nucleoplasm. In terms of biological role, required for association of the cohesin complex with chromatin during interphase. Plays a role in sister chromatid cohesion and normal progression through prometaphase. This is MAU2 chromatid cohesion factor homolog from Drosophila grimshawi (Hawaiian fruit fly).